The chain runs to 284 residues: Cell division protein ZipA (284 aa).

A topological domain (periplasmic) is located at residue methionine 1. The chain crosses the membrane as a helical span at residues 2–22 (EIGLREWLIVIGIIVIAGILF). At 23–284 (DGWRRMRGGK…FERRALTQKR (262 aa)) the chain is on the cytoplasmic side. The interval 47 to 140 (PDDEGSAELL…SASHSDKDQP (94 aa)) is disordered. 3 stretches are compositionally biased toward basic and acidic residues: residues 62–75 (LDTHKEPQLDEHDL), 83–102 (REPRESSSSKRGKRGGEPHQ), and 119–140 (SRDDDFPVEESKSASHSDKDQP).

Belongs to the ZipA family. In terms of assembly, interacts with FtsZ via their C-terminal domains.

The protein localises to the cell inner membrane. In terms of biological role, essential cell division protein that stabilizes the FtsZ protofilaments by cross-linking them and that serves as a cytoplasmic membrane anchor for the Z ring. Also required for the recruitment to the septal ring of downstream cell division proteins. The polypeptide is Cell division protein ZipA (Pseudomonas fluorescens (strain ATCC BAA-477 / NRRL B-23932 / Pf-5)).